The chain runs to 124 residues: Probable glycine cleavage system H protein (124 aa).

The Lipoyl-binding domain occupies 22-104; sequence TGRVGISEFA…FGDGWLVEID (83 aa). Lys63 bears the N6-lipoyllysine mark.

Belongs to the GcvH family. The glycine cleavage system is composed of four proteins: P, T, L and H. It depends on (R)-lipoate as a cofactor.

Its function is as follows. The glycine cleavage system catalyzes the degradation of glycine. The H protein shuttles the methylamine group of glycine from the P protein to the T protein. This is Probable glycine cleavage system H protein from Halobacterium salinarum (strain ATCC 700922 / JCM 11081 / NRC-1) (Halobacterium halobium).